We begin with the raw amino-acid sequence, 396 residues long: L-lactate dehydrogenase (396 aa).

An FMN hydroxy acid dehydrogenase domain is found at 1–380 (MIISAASDYR…SGDSLVQELG (380 aa)). Y24 lines the substrate pocket. The FMN site is built by S106 and Q127. Y129 contacts substrate. Residue T155 coordinates FMN. R164 contributes to the substrate binding site. Residue K251 participates in FMN binding. Residue H275 is the Proton acceptor of the active site. R278 contributes to the substrate binding site. 306-330 (DSGIRNGLDVVRMIALGADTVLLGR) lines the FMN pocket.

The protein belongs to the FMN-dependent alpha-hydroxy acid dehydrogenase family. FMN is required as a cofactor.

The protein localises to the cell inner membrane. It carries out the reaction (S)-lactate + A = pyruvate + AH2. Functionally, catalyzes the conversion of L-lactate to pyruvate. Is coupled to the respiratory chain. The sequence is that of L-lactate dehydrogenase from Salmonella heidelberg (strain SL476).